Consider the following 500-residue polypeptide: Palmitoleoyl-protein carboxylesterase notum1a (500 aa).

Residues 1–26 (MKRSLWVMQVLHWAVMLALVQCGALG) form the signal peptide. N-linked (GlcNAc...) asparagine glycosylation occurs at N101. Catalysis depends on charge relay system residues S237, D344, and H393.

The protein belongs to the pectinacetylesterase family. Notum subfamily.

It is found in the secreted. It carries out the reaction [Wnt protein]-O-(9Z)-hexadecenoyl-L-serine + H2O = [Wnt protein]-L-serine + (9Z)-hexadecenoate + H(+). Functionally, carboxylesterase that acts as a key negative regulator of the Wnt signaling pathway. Acts by specifically mediating depalmitoleoylation of WNT proteins. Serine palmitoleoylation of WNT proteins is required for efficient binding to frizzled receptors. The protein is Palmitoleoyl-protein carboxylesterase notum1a of Danio rerio (Zebrafish).